Reading from the N-terminus, the 391-residue chain is Ferrochelatase (391 aa).

Fe cation-binding residues include His-196 and Glu-281.

It belongs to the ferrochelatase family.

It is found in the cytoplasm. It catalyses the reaction heme b + 2 H(+) = protoporphyrin IX + Fe(2+). It participates in porphyrin-containing compound metabolism; protoheme biosynthesis; protoheme from protoporphyrin-IX: step 1/1. Functionally, catalyzes the ferrous insertion into protoporphyrin IX. The sequence is that of Ferrochelatase from Prochlorococcus marinus (strain MIT 9312).